Here is a 430-residue protein sequence, read N- to C-terminus: Trigger factor (430 aa).

The PPIase FKBP-type domain occupies glycine 163 to proline 248.

The protein belongs to the FKBP-type PPIase family. Tig subfamily.

It localises to the cytoplasm. The enzyme catalyses [protein]-peptidylproline (omega=180) = [protein]-peptidylproline (omega=0). In terms of biological role, involved in protein export. Acts as a chaperone by maintaining the newly synthesized protein in an open conformation. Functions as a peptidyl-prolyl cis-trans isomerase. The sequence is that of Trigger factor from Clostridium botulinum (strain Langeland / NCTC 10281 / Type F).